The following is a 163-amino-acid chain: Small ribosomal subunit protein uS5 (163 aa).

Positions 11 to 74 constitute an S5 DRBM domain; the sequence is LTDRVVHINR…EQAKKNLIRV (64 aa).

Belongs to the universal ribosomal protein uS5 family. As to quaternary structure, part of the 30S ribosomal subunit. Contacts proteins S4 and S8.

Functionally, with S4 and S12 plays an important role in translational accuracy. Located at the back of the 30S subunit body where it stabilizes the conformation of the head with respect to the body. The protein is Small ribosomal subunit protein uS5 of Syntrophotalea carbinolica (strain DSM 2380 / NBRC 103641 / GraBd1) (Pelobacter carbinolicus).